Reading from the N-terminus, the 66-residue chain is Large ribosomal subunit protein bL35 (66 aa).

A disordered region spans residues 20-41 (GKVMSAQRGKRHGMIKRTKKQI). Positions 27 to 41 (RGKRHGMIKRTKKQI) are enriched in basic residues.

Belongs to the bacterial ribosomal protein bL35 family.

The sequence is that of Large ribosomal subunit protein bL35 from Rhodopseudomonas palustris (strain BisB5).